The sequence spans 363 residues: Peptide chain release factor 1 (363 aa).

Gln-237 is subject to N5-methylglutamine. The span at Glu-284 to Arg-296 shows a compositional bias: basic and acidic residues. Positions Glu-284–Arg-305 are disordered.

The protein belongs to the prokaryotic/mitochondrial release factor family. Methylated by PrmC. Methylation increases the termination efficiency of RF1.

The protein resides in the cytoplasm. Its function is as follows. Peptide chain release factor 1 directs the termination of translation in response to the peptide chain termination codons UAG and UAA. This Shewanella sp. (strain MR-4) protein is Peptide chain release factor 1.